Here is a 156-residue protein sequence, read N- to C-terminus: Small ribosomal subunit protein uS7c (156 aa).

This sequence belongs to the universal ribosomal protein uS7 family. In terms of assembly, part of the 30S ribosomal subunit.

The protein resides in the plastid. It localises to the chloroplast. One of the primary rRNA binding proteins, it binds directly to 16S rRNA where it nucleates assembly of the head domain of the 30S subunit. The sequence is that of Small ribosomal subunit protein uS7c (rps7) from Phaeodactylum tricornutum (strain CCAP 1055/1).